The primary structure comprises 240 residues: DISARM protein DrmC (240 aa).

Residues 174-201 enclose the PLD phosphodiesterase domain; that stretch reads GYSSLHAKVIMVDEEKAFVSSANLSYNG. Catalysis depends on residues H179, K181, and D186.

It belongs to the phospholipase D family.

The protein localises to the cytoplasm. In terms of biological role, component of antiviral defense system DISARM (defense island system associated with restriction-modification), composed of DrmE, DrmA, DrmB, DrmC and DrmMII. DISARM is probably a multi-gene restriction module, this subunit is probably a phospholipase or nuclease. Expression of DISARM in B.subtilis (strain BEST7003) confers resistance to phages Nf, phi29, phi105, phi3T, SPO1, SPR and SPP1. Protection is over 10(7)-fold against phi3T, 10(4)-10(5)-fold against Nf, phi29, phi105 and SPR, 100-fold against SPO1 and 10-fold against SPP1. DISARM does not interfere with phage adsorption, but instead interferes with (phi3T) DNA replication early in its cycle, preventing replication, circularization and lysogeny and probably causes phage DNA degradation (DNA is degraded in SPP1-infected cells). The polypeptide is DISARM protein DrmC (Bacillus paralicheniformis (strain ATCC 9945a / NCIMB 11709 / CD-2)).